A 351-amino-acid chain; its full sequence is Glycerol-1-phosphate dehydrogenase [NAD(P)+] (351 aa).

Residues 97–101 (GKVID) and 119–122 (TSPS) contribute to the NAD(+) site. Residue Asp124 participates in substrate binding. An NAD(+)-binding site is contributed by Ser128. Asp171 is a binding site for substrate. The Zn(2+) site is built by Asp171 and His251. His255 is a substrate binding site. Residue His267 coordinates Zn(2+).

This sequence belongs to the glycerol-1-phosphate dehydrogenase family. In terms of assembly, homodimer. The cofactor is Zn(2+).

It localises to the cytoplasm. The enzyme catalyses sn-glycerol 1-phosphate + NAD(+) = dihydroxyacetone phosphate + NADH + H(+). It catalyses the reaction sn-glycerol 1-phosphate + NADP(+) = dihydroxyacetone phosphate + NADPH + H(+). It participates in membrane lipid metabolism; glycerophospholipid metabolism. Catalyzes the NAD(P)H-dependent reduction of dihydroxyacetonephosphate (DHAP or glycerone phosphate) to glycerol 1-phosphate (G1P). The G1P thus generated is used as the glycerophosphate backbone of phospholipids in the cellular membranes of Archaea. In Saccharolobus islandicus (strain L.S.2.15 / Lassen #1) (Sulfolobus islandicus), this protein is Glycerol-1-phosphate dehydrogenase [NAD(P)+].